Reading from the N-terminus, the 141-residue chain is Small ribosomal subunit protein uS12 (141 aa).

A compositionally biased stretch (polar residues) spans 1–11 (MPTISQLVTTS). Residues 1-22 (MPTISQLVTTSRQDKNYKSKSP) are disordered. Residue Asp-102 is modified to 3-methylthioaspartic acid.

Belongs to the universal ribosomal protein uS12 family. As to quaternary structure, part of the 30S ribosomal subunit. Contacts proteins S8 and S17. May interact with IF1 in the 30S initiation complex.

Functionally, with S4 and S5 plays an important role in translational accuracy. In terms of biological role, interacts with and stabilizes bases of the 16S rRNA that are involved in tRNA selection in the A site and with the mRNA backbone. Located at the interface of the 30S and 50S subunits, it traverses the body of the 30S subunit contacting proteins on the other side and probably holding the rRNA structure together. The combined cluster of proteins S8, S12 and S17 appears to hold together the shoulder and platform of the 30S subunit. This chain is Small ribosomal subunit protein uS12, found in Acholeplasma laidlawii (strain PG-8A).